Consider the following 291-residue polypeptide: Small ribosomal subunit protein uS2 (291 aa).

The segment at 255-291 is disordered; it reads AGAATGEWSEAQGAQWETGTGAPAADWAAEPAKESSW.

It belongs to the universal ribosomal protein uS2 family. As to quaternary structure, component of the small ribosomal subunit. Mature ribosomes consist of a small (40S) and a large (60S) subunit. The 40S subunit contains about 33 different proteins and 1 molecule of RNA (18S). The 60S subunit contains about 49 different proteins and 3 molecules of RNA (25S, 5.8S and 5S). Interacts with RPS21.

The protein resides in the cytoplasm. Required for the assembly and/or stability of the 40S ribosomal subunit. Required for the processing of the 20S rRNA-precursor to mature 18S rRNA in a late step of the maturation of 40S ribosomal subunits. The polypeptide is Small ribosomal subunit protein uS2 (Podospora anserina (strain S / ATCC MYA-4624 / DSM 980 / FGSC 10383) (Pleurage anserina)).